Here is a 102-residue protein sequence, read N- to C-terminus: Small ribosomal subunit protein uS10 (102 aa).

It belongs to the universal ribosomal protein uS10 family. As to quaternary structure, part of the 30S ribosomal subunit.

Its function is as follows. Involved in the binding of tRNA to the ribosomes. The chain is Small ribosomal subunit protein uS10 from Pelagibacter ubique (strain HTCC1062).